We begin with the raw amino-acid sequence, 393 residues long: Venom metalloproteinase BumaMPs1 (393 aa).

An N-terminal signal peptide occupies residues 1–15 (MFVHLLVLLFAAVEA). A glycan (N-linked (GlcNAc...) asparagine) is linked at Asn-158. The Peptidase M12B domain maps to 167–377 (KCVKIEYVFV…RVEELITRRK (211 aa)). Residue His-323 coordinates Zn(2+). Glu-324 is a catalytic residue. Residues His-327 and His-333 each contribute to the Zn(2+) site. A disintegrin-like domain region spans residues 378-393 (INHCIVETCDGKRKRN).

This sequence belongs to the venom metalloproteinase (M12B) family. Zn(2+) is required as a cofactor. In terms of processing, contains several disulfide bonds. In terms of tissue distribution, expressed by the venom gland.

The protein localises to the secreted. Metalloprotease. In Olivierus martensii (Manchurian scorpion), this protein is Venom metalloproteinase BumaMPs1.